The following is a 296-amino-acid chain: 4-hydroxy-tetrahydrodipicolinate synthase (296 aa).

T50 lines the pyruvate pocket. Y138 acts as the Proton donor/acceptor in catalysis. K166 functions as the Schiff-base intermediate with substrate in the catalytic mechanism. Residue I208 participates in pyruvate binding.

The protein belongs to the DapA family. As to quaternary structure, homotetramer; dimer of dimers.

Its subcellular location is the cytoplasm. It carries out the reaction L-aspartate 4-semialdehyde + pyruvate = (2S,4S)-4-hydroxy-2,3,4,5-tetrahydrodipicolinate + H2O + H(+). It participates in amino-acid biosynthesis; L-lysine biosynthesis via DAP pathway; (S)-tetrahydrodipicolinate from L-aspartate: step 3/4. Its function is as follows. Catalyzes the condensation of (S)-aspartate-beta-semialdehyde [(S)-ASA] and pyruvate to 4-hydroxy-tetrahydrodipicolinate (HTPA). This is 4-hydroxy-tetrahydrodipicolinate synthase from Ruthia magnifica subsp. Calyptogena magnifica.